Here is a 516-residue protein sequence, read N- to C-terminus: MFSVFGLSIPISATELLLASATFCLVFWVVRAWQPRVPKGLKSPPGPWSWPLIGHVLTLGKSPHLALSRLSQRYGDVLQIRIGCTPVLVLSGLDTIRQALVRQGDDFKGRPDLYSFTLVADGQSMTFNPDSGPVWAARRRLAQNALKSFSIASDPASSSSCYLEEHVSKESEYLIGKFQELMAGSGRFDPYRYVVVSVANVICAMCFGRRYDHESQVLLSVVGLSNEFGAVAASGNPADFIPILRYLPNTALDDFKDLNRRFYIFMQKMLKEHYKTFEKGRIRDITDSLIEHCQGKRLDENANIQLSDEKIVNVVMDLFGAGFDTVTTAISWSLMYLVTSPSVQKKIQEELDTVIGSARQPRLSDRPRLPYLEAFILETFRHSSFLPFTIPHSTTRDTSLNGFYIPKGRCVFVNQWQINHDQKLWDDPSAFWPERFLTADGTINKALSEKVILFGLGKRKCIGETIARWEVFLFLAILLQQVEFRVTPGVKVDMTPVYGLTMKHAHCEHFQAHMRS.

Residues 33-44 (WQPRVPKGLKSP) form a mitochondrial targeting signal region. Ser-71 carries O-linked (GlcNAc) serine glycosylation. Phe-228 provides a ligand contact to substrate. Cys-461 is a binding site for heme.

It belongs to the cytochrome P450 family. As to quaternary structure, interacts with cytosolic chaperones HSP70 and HSP90; this interaction is required for initial targeting to mitochondria. Interacts (via mitochondrial targeting signal) with TOMM40 (via N-terminus); this interaction is required for translocation across the mitochondrial outer membrane. Requires heme as cofactor.

The protein localises to the endoplasmic reticulum membrane. Its subcellular location is the mitochondrion inner membrane. It localises to the microsome membrane. The protein resides in the cytoplasm. The enzyme catalyses an organic molecule + reduced [NADPH--hemoprotein reductase] + O2 = an alcohol + oxidized [NADPH--hemoprotein reductase] + H2O + H(+). It catalyses the reaction estrone + reduced [NADPH--hemoprotein reductase] + O2 = 2-hydroxyestrone + oxidized [NADPH--hemoprotein reductase] + H2O + H(+). The catalysed reaction is estrone + reduced [NADPH--hemoprotein reductase] + O2 = 4-hydroxyestrone + oxidized [NADPH--hemoprotein reductase] + H2O + H(+). It carries out the reaction estrone + reduced [NADPH--hemoprotein reductase] + O2 = 6alpha-hydroxyestrone + oxidized [NADPH--hemoprotein reductase] + H2O + H(+). The enzyme catalyses estrone + reduced [NADPH--hemoprotein reductase] + O2 = 15alpha-hydroxyestrone + oxidized [NADPH--hemoprotein reductase] + H2O + H(+). It catalyses the reaction estrone + reduced [NADPH--hemoprotein reductase] + O2 = 16alpha-hydroxyestrone + oxidized [NADPH--hemoprotein reductase] + H2O + H(+). The catalysed reaction is 17beta-estradiol + reduced [NADPH--hemoprotein reductase] + O2 = 2-hydroxy-17beta-estradiol + oxidized [NADPH--hemoprotein reductase] + H2O + H(+). It carries out the reaction 17beta-estradiol + reduced [NADPH--hemoprotein reductase] + O2 = 4-hydroxy-17beta-estradiol + oxidized [NADPH--hemoprotein reductase] + H2O + H(+). The enzyme catalyses 17beta-estradiol + reduced [NADPH--hemoprotein reductase] + O2 = 6alpha-hydroxy-17beta-estradiol + oxidized [NADPH--hemoprotein reductase] + H2O + H(+). It catalyses the reaction 17beta-estradiol + reduced [NADPH--hemoprotein reductase] + O2 = 7alpha-hydroxy-17beta-estradiol + oxidized [NADPH--hemoprotein reductase] + H2O + H(+). The catalysed reaction is 17beta-estradiol + reduced [NADPH--hemoprotein reductase] + O2 = 15alpha-hydroxy-17beta-estradiol + oxidized [NADPH--hemoprotein reductase] + H2O + H(+). It carries out the reaction (5Z,8Z,11Z)-eicosatrienoate + reduced [NADPH--hemoprotein reductase] + O2 = 19-hydroxy-(5Z,8Z,11Z)-eicosatrienoate + oxidized [NADPH--hemoprotein reductase] + H2O + H(+). The enzyme catalyses (5Z,8Z,11Z,14Z)-eicosatetraenoate + reduced [NADPH--hemoprotein reductase] + O2 = 16-hydroxy-(5Z,8Z,11Z,14Z)-eicosatetraenoate + oxidized [NADPH--hemoprotein reductase] + H2O + H(+). It catalyses the reaction (5Z,8Z,11Z,14Z)-eicosatetraenoate + reduced [NADPH--hemoprotein reductase] + O2 = 17-hydroxy-(5Z,8Z,11Z,14Z)-eicosatetraenoate + oxidized [NADPH--hemoprotein reductase] + H2O + H(+). The catalysed reaction is (5Z,8Z,11Z,14Z)-eicosatetraenoate + reduced [NADPH--hemoprotein reductase] + O2 = 18-hydroxy-(5Z,8Z,11Z,14Z)-eicosatetraenoate + oxidized [NADPH--hemoprotein reductase] + H2O + H(+). It carries out the reaction (5Z,8Z,11Z,14Z)-eicosatetraenoate + reduced [NADPH--hemoprotein reductase] + O2 = 19-hydroxy-(5Z,8Z,11Z,14Z)-eicosatetraenoate + oxidized [NADPH--hemoprotein reductase] + H2O + H(+). The enzyme catalyses (5Z,8Z,11Z,14Z,17Z)-eicosapentaenoate + reduced [NADPH--hemoprotein reductase] + O2 = 19-hydroxy-(5Z,8Z,11Z,14Z,17Z)-eicosapentaenoate + oxidized [NADPH--hemoprotein reductase] + H2O + H(+). It catalyses the reaction (5Z,8Z,11Z,14Z)-eicosatetraenoate + reduced [NADPH--hemoprotein reductase] + O2 = (8R,9S)-epoxy-(5Z,11Z,14Z)-eicosatrienoate + oxidized [NADPH--hemoprotein reductase] + H2O + H(+). The catalysed reaction is (5Z,8Z,11Z,14Z)-eicosatetraenoate + reduced [NADPH--hemoprotein reductase] + O2 = (11R,12S)-epoxy-(5Z,8Z,14Z)-eicosatrienoate + oxidized [NADPH--hemoprotein reductase] + H2O + H(+). It carries out the reaction (5Z,8Z,11Z,14Z)-eicosatetraenoate + reduced [NADPH--hemoprotein reductase] + O2 = (14S,15R)-epoxy-(5Z,8Z,11Z)-eicosatrienoate + oxidized [NADPH--hemoprotein reductase] + H2O + H(+). The enzyme catalyses (5Z,8Z,11Z,14Z)-eicosatetraenoate + reduced [NADPH--hemoprotein reductase] + O2 = (14R,15S)-epoxy-(5Z,8Z,11Z)-eicosatrienoate + oxidized [NADPH--hemoprotein reductase] + H2O + H(+). It catalyses the reaction (5Z,8Z,11Z,14Z,17Z)-eicosapentaenoate + reduced [NADPH--hemoprotein reductase] + O2 = (17R,18S)-epoxy-(5Z,8Z,11Z,14Z)-eicosatetraenoate + oxidized [NADPH--hemoprotein reductase] + H2O + H(+). The catalysed reaction is (4Z,7Z,10Z,13Z,16Z,19Z)-docosahexaenoate + reduced [NADPH--hemoprotein reductase] + O2 = (19S,20R)-epoxy-(4Z,7Z,10Z,13Z,16Z)-docosapentaenoate + oxidized [NADPH--hemoprotein reductase] + H2O + H(+). It carries out the reaction (4Z,7Z,10Z,13Z,16Z,19Z)-docosahexaenoate + reduced [NADPH--hemoprotein reductase] + O2 = (19R,20S)-epoxy-(4Z,7Z,10Z,13Z,16Z)-docosapentaenoate + oxidized [NADPH--hemoprotein reductase] + H2O + H(+). The enzyme catalyses all-trans-retinol + reduced [NADPH--hemoprotein reductase] + O2 = all-trans-retinal + oxidized [NADPH--hemoprotein reductase] + 2 H2O + H(+). It catalyses the reaction all-trans-retinal + reduced [NADPH--hemoprotein reductase] + O2 = all-trans-retinoate + oxidized [NADPH--hemoprotein reductase] + H2O + 2 H(+). The catalysed reaction is (13S)-hydroperoxy-(9Z,11E)-octadecadienoate = 13-oxo-(9Z,11E)-octadecadienoate + H2O. It carries out the reaction (12S)-hydroperoxy-(5Z,8Z,10E,14Z)-eicosatetraenoate = 12-oxo-(5Z,8Z,10E,14Z)-eicosatetraenoate + H2O. The enzyme catalyses (15S)-hydroperoxy-(5Z,8Z,11Z,13E)-eicosatetraenoate = 15-oxo-(5Z,8Z,11Z,13E)-eicosatetraenoate + H2O. It catalyses the reaction (5S)-hydroperoxy-(6E,8Z,11Z,14Z)-eicosatetraenoate = 5-oxo-(6E,8Z,11Z,14Z)-eicosatetraenoate + H2O. The protein operates within steroid hormone biosynthesis. Its pathway is lipid metabolism; fatty acid metabolism. It participates in cofactor metabolism; retinol metabolism. In terms of biological role, a cytochrome P450 monooxygenase involved in the metabolism of various endogenous substrates, including fatty acids, steroid hormones and vitamins. Mechanistically, uses molecular oxygen inserting one oxygen atom into a substrate, and reducing the second into a water molecule, with two electrons provided by NADPH via cytochrome P450 reductase (CPR; NADPH-ferrihemoprotein reductase). Catalyzes the hydroxylation of carbon-hydrogen bonds. Exhibits high catalytic activity for the formation of hydroxyestrogens from estrone (E1) and 17beta-estradiol (E2), namely 2-hydroxy E1 and E2, as well as D-ring hydroxylated E1 and E2 at the C15alpha and C16alpha positions. Displays different regioselectivities for polyunsaturated fatty acids (PUFA) hydroxylation. Catalyzes the epoxidation of double bonds of certain PUFA. Converts arachidonic acid toward epoxyeicosatrienoic acid (EET) regioisomers, 8,9-, 11,12-, and 14,15-EET, that function as lipid mediators in the vascular system. Displays an absolute stereoselectivity in the epoxidation of eicosapentaenoic acid (EPA) producing the 17(R),18(S) enantiomer. May play an important role in all-trans retinoic acid biosynthesis in extrahepatic tissues. Catalyzes two successive oxidative transformation of all-trans retinol to all-trans retinal and then to the active form all-trans retinoic acid. May also participate in eicosanoids metabolism by converting hydroperoxide species into oxo metabolites (lipoxygenase-like reaction, NADPH-independent). This is Cytochrome P450 1A1 (CYP1A1) from Balaenoptera acutorostrata (Common minke whale).